Consider the following 210-residue polypeptide: Protein-methionine-sulfoxide reductase heme-binding subunit MsrQ (210 aa).

6 helical membrane-spanning segments follow: residues 8 to 28 (LAVF…AWIF), 37 to 57 (VLVE…LAMT), 75 to 95 (LGLW…LFIL), 110 to 130 (PYII…VTSN), 147 to 167 (LVYV…RADL), and 169 to 189 (EWAL…PMIA).

This sequence belongs to the MsrQ family. In terms of assembly, heterodimer of a catalytic subunit (MsrP) and a heme-binding subunit (MsrQ). FMN serves as cofactor. Heme b is required as a cofactor.

It is found in the cell inner membrane. Its function is as follows. Part of the MsrPQ system that repairs oxidized periplasmic proteins containing methionine sulfoxide residues (Met-O), using respiratory chain electrons. Thus protects these proteins from oxidative-stress damage caused by reactive species of oxygen and chlorine generated by the host defense mechanisms. MsrPQ is essential for the maintenance of envelope integrity under bleach stress, rescuing a wide series of structurally unrelated periplasmic proteins from methionine oxidation. MsrQ provides electrons for reduction to the reductase catalytic subunit MsrP, using the quinone pool of the respiratory chain. The protein is Protein-methionine-sulfoxide reductase heme-binding subunit MsrQ of Pseudomonas syringae pv. tomato (strain ATCC BAA-871 / DC3000).